We begin with the raw amino-acid sequence, 85 residues long: Large ribosomal subunit protein bL27 (85 aa).

Positions 1-21 are disordered; the sequence is MAHKKAGGSTRNGRDSEGKRL.

Belongs to the bacterial ribosomal protein bL27 family.

The polypeptide is Large ribosomal subunit protein bL27 (Hamiltonella defensa subsp. Acyrthosiphon pisum (strain 5AT)).